A 494-amino-acid chain; its full sequence is Alpha-amylase-related protein (494 aa).

An N-terminal signal peptide occupies residues methionine 1 to alanine 20. At glutamine 21 the chain carries Pyrrolidone carboxylic acid. Residues cysteine 48 and cysteine 104 are joined by a disulfide bond. Residues asparagine 118, glutamine 169, and aspartate 178 each coordinate Ca(2+). A disulfide bridge links cysteine 157 with cysteine 171. Position 206 (arginine 206) interacts with chloride. Aspartate 208 acts as the Nucleophile in catalysis. Histidine 212 is a Ca(2+) binding site. Glutamate 245 serves as the catalytic Proton donor. Residues asparagine 308 and arginine 343 each coordinate chloride. 3 disulfides stabilise this stretch: cysteine 376/cysteine 382, cysteine 418/cysteine 441, and cysteine 448/cysteine 460.

The protein belongs to the glycosyl hydrolase 13 family. Monomer. Ca(2+) serves as cofactor. It depends on chloride as a cofactor.

It is found in the secreted. It catalyses the reaction Endohydrolysis of (1-&gt;4)-alpha-D-glucosidic linkages in polysaccharides containing three or more (1-&gt;4)-alpha-linked D-glucose units.. The polypeptide is Alpha-amylase-related protein (Amyrel) (Drosophila bakoue (Fruit fly)).